The primary structure comprises 337 residues: F-box protein At2g27310 (337 aa).

Residues Asp10–Ile58 enclose the F-box domain.

In Arabidopsis thaliana (Mouse-ear cress), this protein is F-box protein At2g27310.